The sequence spans 111 residues: Phosphoribosyl-ATP pyrophosphatase (111 aa).

It belongs to the PRA-PH family.

It localises to the cytoplasm. The enzyme catalyses 1-(5-phospho-beta-D-ribosyl)-ATP + H2O = 1-(5-phospho-beta-D-ribosyl)-5'-AMP + diphosphate + H(+). It participates in amino-acid biosynthesis; L-histidine biosynthesis; L-histidine from 5-phospho-alpha-D-ribose 1-diphosphate: step 2/9. This is Phosphoribosyl-ATP pyrophosphatase from Pseudomonas paraeruginosa (strain DSM 24068 / PA7) (Pseudomonas aeruginosa (strain PA7)).